A 233-amino-acid chain; its full sequence is Aquaglyceroporin AqpS (233 aa).

The next 2 helical transmembrane spans lie at 11–31 and 40–60; these read VAEA…GIMA and LALV…VTIL. The NPA 1 motif lies at 69–71; sequence NPA. The next 3 membrane-spanning stretches (helical) occupy residues 89–109, 125–145, and 152–172; these read AYVI…HLMF, AQWL…LAGI, and VPWL…STSF. Positions 174-176 match the NPA 2 motif; it reads NPA. Residues 193-213 traverse the membrane as a helical segment; the sequence is GDLPGFVIAELLGAVCALALM.

Belongs to the MIP/aquaporin (TC 1.A.8) family. NIP (TC 1.A.8.12) subfamily.

Its subcellular location is the cell inner membrane. In terms of biological role, involved in resistance to arsenic. Facilitates efflux of arsenite [As(III)]. Arsenate [As(V)] enters the cell through phosphate transport systems and is reduced to arsenite by the arsenate reductase ArsC. Internally generated arsenite flows out of the cell by downhill movement through AqpS. Can also transport the highly toxic methylarsenite [MAs(III)] and the relatively non-toxic methylarsenate [MAs(V)]. May be a component of an methylarsenite resistance pathway in which methylarsenite enters cells via AqpS, is oxidized by ArsH to methylarsenate, which exits the cells via AqpS. This pathway may confer a selective advantage for R.melliloti to grow in the presence of environmental methylarsenicals. The protein is Aquaglyceroporin AqpS of Rhizobium meliloti (strain 1021) (Ensifer meliloti).